The primary structure comprises 347 residues: GMP reductase (347 aa).

Residue 108-131 participates in NADP(+) binding; the sequence is ADFEKTKQILDLNPALNFVCIDVA. Residues G181 and G183 each coordinate K(+). C186 serves as the catalytic Thioimidate intermediate. Residue 216–239 coordinates NADP(+); it reads IVSDGGCTTPGDVAKAFGGGADFV.

It belongs to the IMPDH/GMPR family. GuaC type 1 subfamily. As to quaternary structure, homotetramer.

It carries out the reaction IMP + NH4(+) + NADP(+) = GMP + NADPH + 2 H(+). Functionally, catalyzes the irreversible NADPH-dependent deamination of GMP to IMP. It functions in the conversion of nucleobase, nucleoside and nucleotide derivatives of G to A nucleotides, and in maintaining the intracellular balance of A and G nucleotides. This is GMP reductase from Escherichia coli (strain SMS-3-5 / SECEC).